Reading from the N-terminus, the 104-residue chain is Large ribosomal subunit protein uL24 (104 aa).

It belongs to the universal ribosomal protein uL24 family. Part of the 50S ribosomal subunit.

In terms of biological role, one of two assembly initiator proteins, it binds directly to the 5'-end of the 23S rRNA, where it nucleates assembly of the 50S subunit. One of the proteins that surrounds the polypeptide exit tunnel on the outside of the subunit. This is Large ribosomal subunit protein uL24 from Pseudoalteromonas atlantica (strain T6c / ATCC BAA-1087).